The sequence spans 132 residues: Fatty acid-binding protein, brain (132 aa).

At Val2 the chain carries N-acetylvaline. A fatty acid is bound at residue Arg127 to Tyr129.

The protein belongs to the calycin superfamily. Fatty-acid binding protein (FABP) family. As to expression, expressed in brain and other neural tissues.

It localises to the cytoplasm. Functionally, B-FABP could be involved in the transport of a so far unknown hydrophobic ligand with potential morphogenic activity during CNS development. It is required for the establishment of the radial glial fiber system in developing brain, a system that is necessary for the migration of immature neurons to establish cortical layers. This is Fatty acid-binding protein, brain (Fabp7) from Mus musculus (Mouse).